The sequence spans 127 residues: Modulator protein MzrA (127 aa).

Residues 1-10 (MVISPLALRR) lie on the Cytoplasmic side of the membrane. The helical transmembrane segment at 11-31 (LSYGLIALVLLSALILVWTAL) threads the bilayer. Residues 32 to 127 (QRQESTLAIR…RLRDTSHRFG (96 aa)) lie on the Periplasmic side of the membrane.

This sequence belongs to the MzrA family. As to quaternary structure, interacts with EnvZ.

The protein resides in the cell inner membrane. Its function is as follows. Modulates the activity of the EnvZ/OmpR two-component regulatory system, probably by directly modulating EnvZ enzymatic activity and increasing stability of phosphorylated OmpR. This is Modulator protein MzrA from Enterobacter sp. (strain 638).